Here is a 288-residue protein sequence, read N- to C-terminus: Protoheme IX farnesyltransferase (288 aa).

9 consecutive transmembrane segments (helical) span residues 16–36 (VWSL…PYFN), 37–57 (LHYI…SMGA), 88–108 (INGL…LAAF), 111–131 (LYAA…YSYL), 138–158 (WNII…WYTV), 162–182 (FSIL…IHVW), 210–230 (AICI…PAFF), 236–256 (VYMI…IVFV), and 265–285 (LKLF…VLIF).

The protein belongs to the UbiA prenyltransferase family. Protoheme IX farnesyltransferase subfamily.

It is found in the cell membrane. The enzyme catalyses heme b + (2E,6E)-farnesyl diphosphate + H2O = Fe(II)-heme o + diphosphate. Its pathway is porphyrin-containing compound metabolism; heme O biosynthesis; heme O from protoheme: step 1/1. In terms of biological role, converts heme B (protoheme IX) to heme O by substitution of the vinyl group on carbon 2 of heme B porphyrin ring with a hydroxyethyl farnesyl side group. This is Protoheme IX farnesyltransferase from Thermoplasma acidophilum (strain ATCC 25905 / DSM 1728 / JCM 9062 / NBRC 15155 / AMRC-C165).